Consider the following 343-residue polypeptide: MSAFTPASEVLLRHSDDFEQSRILFAGDLQDDLPARLDTAASRAHTQQFHHWQVLSCQMGDNARFSLVATANDVADCDTLIYYWPKNKPEAQFQLMNLLSLLPVGTDIFVVGENRSGVRSAEQMLADYAPLNKVDSARRCGLYFGRLEKQPVFDADKFWGEYSVDGLTVKTLPGVFSRDGLDVGSQLLLSTLTPHTKGKVLDVGCGAGVLSVAFARHSPKIRLTLCDVSAPAVEASRATLAANGVEGEVFASNVFSEVKGCFDMIISNPPFHDGMQTSLDAAQTLIRGAVRHLNSGGELRIVANAFLPYPDVLDETFGFHEVIAQTGRFKVYRAIMTRQAKKG.

The protein belongs to the methyltransferase superfamily. RsmC family. As to quaternary structure, monomer.

It localises to the cytoplasm. It catalyses the reaction guanosine(1207) in 16S rRNA + S-adenosyl-L-methionine = N(2)-methylguanosine(1207) in 16S rRNA + S-adenosyl-L-homocysteine + H(+). Specifically methylates the guanine in position 1207 of 16S rRNA in the 30S particle. This Shigella flexneri protein is Ribosomal RNA small subunit methyltransferase C.